Here is a 393-residue protein sequence, read N- to C-terminus: MGYYSLTEVTAVQYAKEHGYFEKKANVVCHEIGDGNLNYVFKLDDGEKSIIIKQALPYAKVVGESWPLSIKRATIESKALQIFAKYVPEYVPVVYSHDEELAVTVIEDLSRLSITRTGLIDGEEYPLLSQHIGRFLAHVLFYTSDLGLESEEKRVLEGTFVNPDLCKITEDLVFTDPFGHYDTNDYEPELQLTIDELWSDKTLKLKVAQYKYKFLTRKEALIHGDLHTGSIFSSPSETKVIDPEFATYGPFGFDIGQFIANLLLNALSREEEQRGVLFFHIEKTWSYFVETFTKLWIGEGVEAYTKEKQWLPIILQNIFTDAVGFAGCELIRRTIGLAHVADLDEITNKETRIQAKKQALSLGKELIKYESKNADIQLFRTLFQQTVSGGIKA.

Residues N38, K53, and 107–109 (EDL) each bind ATP. D225 contributes to the substrate binding site. 242–244 (DPE) provides a ligand contact to ATP. R332 lines the substrate pocket.

Belongs to the methylthioribose kinase family. Homodimer.

It catalyses the reaction 5-(methylsulfanyl)-D-ribose + ATP = 5-(methylsulfanyl)-alpha-D-ribose 1-phosphate + ADP + H(+). The protein operates within amino-acid biosynthesis; L-methionine biosynthesis via salvage pathway; S-methyl-5-thio-alpha-D-ribose 1-phosphate from S-methyl-5'-thioadenosine (hydrolase route): step 2/2. Catalyzes the phosphorylation of methylthioribose into methylthioribose-1-phosphate. The chain is Methylthioribose kinase from Bacillus cereus (strain ZK / E33L).